A 702-amino-acid chain; its full sequence is Ribosomal RNA large subunit methyltransferase K/L (702 aa).

The 112-residue stretch at 43–154 folds into the THUMP domain; sequence LVYQSLMWSR…KETASIALDL (112 aa).

This sequence belongs to the methyltransferase superfamily. RlmKL family.

It localises to the cytoplasm. The catalysed reaction is guanosine(2445) in 23S rRNA + S-adenosyl-L-methionine = N(2)-methylguanosine(2445) in 23S rRNA + S-adenosyl-L-homocysteine + H(+). It catalyses the reaction guanosine(2069) in 23S rRNA + S-adenosyl-L-methionine = N(2)-methylguanosine(2069) in 23S rRNA + S-adenosyl-L-homocysteine + H(+). Specifically methylates the guanine in position 2445 (m2G2445) and the guanine in position 2069 (m7G2069) of 23S rRNA. This is Ribosomal RNA large subunit methyltransferase K/L from Escherichia coli O157:H7.